A 40-amino-acid polypeptide reads, in one-letter code: Photosystem II reaction center protein J (40 aa).

Residues 8 to 28 (IPLWLIGTVAGILVLGLLGIF) form a helical membrane-spanning segment.

Belongs to the PsbJ family. In terms of assembly, PSII is composed of 1 copy each of membrane proteins PsbA, PsbB, PsbC, PsbD, PsbE, PsbF, PsbH, PsbI, PsbJ, PsbK, PsbL, PsbM, PsbT, PsbX, PsbY, PsbZ, Psb30/Ycf12, at least 3 peripheral proteins of the oxygen-evolving complex and a large number of cofactors. It forms dimeric complexes.

It localises to the plastid. The protein resides in the chloroplast thylakoid membrane. Functionally, one of the components of the core complex of photosystem II (PSII). PSII is a light-driven water:plastoquinone oxidoreductase that uses light energy to abstract electrons from H(2)O, generating O(2) and a proton gradient subsequently used for ATP formation. It consists of a core antenna complex that captures photons, and an electron transfer chain that converts photonic excitation into a charge separation. This is Photosystem II reaction center protein J from Physcomitrium patens (Spreading-leaved earth moss).